Reading from the N-terminus, the 60-residue chain is Large ribosomal subunit protein uL30 (60 aa).

Belongs to the universal ribosomal protein uL30 family. In terms of assembly, part of the 50S ribosomal subunit.

In Clavibacter michiganensis subsp. michiganensis (strain NCPPB 382), this protein is Large ribosomal subunit protein uL30.